Here is a 369-residue protein sequence, read N- to C-terminus: 1-aminocyclopropane-1-carboxylate oxidase homolog 2 (369 aa).

Residues 217–318 (KGLRMLCHYF…VSVACFFHTH (102 aa)) form the Fe2OG dioxygenase domain. Residues His-241, Asp-243, and His-297 each coordinate Fe cation.

The protein belongs to the iron/ascorbate-dependent oxidoreductase family. The cofactor is Fe cation.

This chain is 1-aminocyclopropane-1-carboxylate oxidase homolog 2, found in Arabidopsis thaliana (Mouse-ear cress).